The sequence spans 1365 residues: Serine-aspartate repeat-containing protein D (1365 aa).

A signal peptide spans 1 to 35; the sequence is MLNRENKTAITRKGMVSNRLNKFSIRKYTVGTASI. The YSIRK-G/S signaling motif motif lies at 23–34; the sequence is FSIRKYTVGTAS. Positions 36–568 are ligand binding A region; the sequence is LVGTTLIFGL…NNQSGGAGQE (533 aa). The tract at residues 54 to 185 is disordered; it reads ESTNKELNEA…NKKVDAKTES (132 aa). 2 stretches are compositionally biased toward polar residues: residues 62 to 71 and 94 to 109; these read EATTSASDNQ and EMVS…NGNK. Basic and acidic residues predominate over residues 130–145; that stretch reads KSDEQASPKSTNEDLN. Composition is skewed to polar residues over residues 146 to 155 and 163 to 173; these read TKQTISNQEA and NKSVVNAQPTN. Positions 174-183 are enriched in basic and acidic residues; the sequence is EENKKVDAKT. CNA-B domains lie at 569-680, 681-791, 792-901, 902-1012, and 1013-1123; these read VYKI…IYKP, KYNL…YKTP, KYNL…FYKP, TYNL…YKTP, and KYSL…EEDT. Disordered stretches follow at residues 857-884, 972-991, and 1078-1341; these read ETPS…STTG, YTPT…NGLT, and EKPA…SNNA. Polar residues-rich tracts occupy residues 860–869 and 972–981; these read SGYTPTQVGS and YTPTSVTSGN. Acidic residues-rich tracts occupy residues 1091-1101 and 1118-1304; these read TEDDKDADGGE and YFEE…DSDS. The LPXTG sorting signal motif lies at 1328 to 1332; the sequence is LPETG. T1331 carries the post-translational modification Pentaglycyl murein peptidoglycan amidated threonine. Positions 1332-1365 are cleaved as a propeptide — removed by sortase; that stretch reads GNENSGSNNATLFGGLFAALGSLLLFGRRKKQNK.

It belongs to the serine-aspartate repeat-containing protein (SDr) family. Interacts with host DSG1; this interaction increases S.aureus adherence to keratinocytes.

It is found in the secreted. The protein localises to the cell wall. Cell surface-associated calcium-binding protein which plays an important role in adhesion and pathogenesis. Mediates interactions with components of the extracellular matrix such as host DSG1 to promote bacterial adhesion to host cells. Contributes to the resistance to killing by innate immune components such as neutrophils present in blood and thus attenuates bacterial clearance. This Staphylococcus aureus (strain MSSA476) protein is Serine-aspartate repeat-containing protein D (sdrD).